Consider the following 421-residue polypeptide: uncharacterized protein (421 aa).

Residues 14-72 (DLTKGDTITVEVTRPAHGGEGIAHHGGRVIFVRGGFPGDDVDVEITQVKKRFARGFVVQ) enclose the TRAM domain. S-adenosyl-L-methionine contacts are provided by glutamine 250, tyrosine 286, glutamate 308, and aspartate 349. Cysteine 376 serves as the catalytic Nucleophile.

This sequence belongs to the class I-like SAM-binding methyltransferase superfamily. RNA M5U methyltransferase family.

This is an uncharacterized protein from Corynebacterium efficiens (strain DSM 44549 / YS-314 / AJ 12310 / JCM 11189 / NBRC 100395).